The following is a 1071-amino-acid chain: MPRDGNEGMFTIPGFSQIQFEGFCRFVDQGLMEEFHKFPKIEDTDQEIEFQLFVERYQLVEPLIKERDAVYESLTYSSELYVPAGLIWKTGRDMQEQTIFIGNIPLMNSLGTFIVNGIYRIVINQILQSPGIYYRSELDHNGISVYTSTIISDWGGRSELEIDRKSRIWARVSRKQKISILVLSSAMGSNLREILDNVCYPEIFLSFLNDREKKKIGSKENAILEFYQQFACVGGDPVFSESLCKELQKKFFQQRCELGRIGRRNMNRRLNLDIPQSNTFLLPRDVLAAADHLIGMKFGMGTLDDMNHLKNKRIRSVADLLQDQFGLALVRLENAVRGTICGAIRHKLILTPQNLVSSTSLTTTYESFFGLHPLSQVLDRTNPLTQIVHGRKLSYLGPGGLTGRTASFRIRDIHPSHYGRICPIDTSEGINVGLIGSLAIHARIGHWGSIESPFYEVYQRSKETKMVFLSPSRDEYYTVATGNSLALNRGGIQEEQIVPARYRQEFLTIAWEQIHLRSIFPFQYFSIGASLIPFIEHNDANRALMSSNMQRQAVPLSRSXXXXXXXXXXXXAALDSGVSAIAECEGKIIYTDTHKIVLSGHGDTISIPLVMYQRSNKNTCMHQNPQVRRGKCIKKGQILADGAATVGGELALGKNVLVAYMPWEGYNFEDAVLISERLVYEDIYTSFHIRKYEIQTHVTSQGPERITHEIPHLEAHLLRNLDRNGIVALGSWVETGDILVGKLTPQTANESSYAPEDRLLRAILGIQVSTAKETCLKLPIGGRGRVIDVRWIQKKGGSSYNPETIRVYISQKREIKVGDKVAGRHGNKGIISKILSRQDMPYLQDGTPVDMVFNPLGVPSRMNVGQIFECSLGLAGDLLDRHYRIAPFDERYEQEASRKLVFSELYEASKQTANPWVFEPEYPGKSRIFDGRTGDPFEQPVLIGKSYILKLIHQVDDKIHGRSSGHYALVTQQPLRGRAKQGGQRVGEMEVWALEGFGVAHILQEMLTYKSDHIRARQEVLGTTIIGGTIPTPEDAPESFRLLVRELRSLALELNHFLVSEKNFQINRKEA.

This sequence belongs to the RNA polymerase beta chain family. In plastids the minimal PEP RNA polymerase catalytic core is composed of four subunits: alpha, beta, beta', and beta''. When a (nuclear-encoded) sigma factor is associated with the core the holoenzyme is formed, which can initiate transcription.

It localises to the plastid. The protein localises to the chloroplast. It carries out the reaction RNA(n) + a ribonucleoside 5'-triphosphate = RNA(n+1) + diphosphate. DNA-dependent RNA polymerase catalyzes the transcription of DNA into RNA using the four ribonucleoside triphosphates as substrates. The polypeptide is DNA-directed RNA polymerase subunit beta (Acorus gramineus (Dwarf sweet flag)).